The chain runs to 301 residues: Probable alpha-L-glutamate ligase (301 aa).

One can recognise an ATP-grasp domain in the interval 104–287 (LQLLARKGIG…VATKVIEFIE (184 aa)). ATP-binding positions include Lys141, 178 to 179 (EF), Asp187, and 211 to 213 (RSN). Asp248, Glu260, and Asn262 together coordinate Mg(2+). Mn(2+) is bound by residues Asp248, Glu260, and Asn262.

This sequence belongs to the RimK family. It depends on Mg(2+) as a cofactor. Requires Mn(2+) as cofactor.

In Nitrosococcus oceani (strain ATCC 19707 / BCRC 17464 / JCM 30415 / NCIMB 11848 / C-107), this protein is Probable alpha-L-glutamate ligase.